A 282-amino-acid chain; its full sequence is MTNFSSSPPIAFGDLQGCHAAYRQLFDTLAPAADTPLWFAGDLVNRGPASLATLREIAALGERAIAVLGNHDLHLLAVAAGIRTLKPGDTIGEILDAPDADDLIEWVRHRPFAHFERGMLMVHAGLLPQWDAALALELADELQRALRASNWRDTLRSLYGNDPNCWSPDLKHADRLRVAFNAFTRIRFCTPEGAMEFRANGGPAAAPAGYLPWFDAPGRKTADVTVVFGHWAALGLMLRENLVALDSGCVWGNRLSAVRLADDPAARVVTQVACERCGAADE.

The protein belongs to the Ap4A hydrolase family.

It carries out the reaction P(1),P(4)-bis(5'-adenosyl) tetraphosphate + H2O = 2 ADP + 2 H(+). In terms of biological role, hydrolyzes diadenosine 5',5'''-P1,P4-tetraphosphate to yield ADP. The polypeptide is Bis(5'-nucleosyl)-tetraphosphatase, symmetrical (Burkholderia mallei (strain NCTC 10247)).